Consider the following 251-residue polypeptide: Triosephosphate isomerase (251 aa).

9–11 (NWK) serves as a coordination point for substrate. The active-site Electrophile is the histidine 95. Residue glutamate 167 is the Proton acceptor of the active site. Residues glycine 173, serine 213, and 234–235 (GG) contribute to the substrate site. Serine 213 carries the post-translational modification Phosphoserine.

The protein belongs to the triosephosphate isomerase family. In terms of assembly, homodimer.

It is found in the cytoplasm. It catalyses the reaction D-glyceraldehyde 3-phosphate = dihydroxyacetone phosphate. The protein operates within carbohydrate biosynthesis; gluconeogenesis. It participates in carbohydrate degradation; glycolysis; D-glyceraldehyde 3-phosphate from glycerone phosphate: step 1/1. In terms of biological role, involved in the gluconeogenesis. Catalyzes stereospecifically the conversion of dihydroxyacetone phosphate (DHAP) to D-glyceraldehyde-3-phosphate (G3P). In Bacillus cereus (strain G9842), this protein is Triosephosphate isomerase.